The chain runs to 199 residues: Interleukin-11 (199 aa).

The signal sequence occupies residues 1–21 (MNCVCRLVLVVLSLWPDRVVA). Positions 182–190 (HLTLDWAVR) are important for interaction with IL11RA and for the stimulation of cell proliferation.

This sequence belongs to the IL-6 superfamily. In terms of assembly, interacts with IL11RA to associate with IL6ST, giving rise to a multimeric signaling complex.

Its subcellular location is the secreted. Its function is as follows. Cytokine that stimulates the proliferation of hematopoietic stem cells and megakaryocyte progenitor cells and induces megakaryocyte maturation resulting in increased platelet production. Also promotes the proliferation of hepatocytes in response to liver damage. Binding to its receptor formed by IL6ST and IL11RA activates a signaling cascade that promotes cell proliferation. Signaling leads to the activation of intracellular protein kinases and the phosphorylation of STAT3. The interaction with the membrane-bound IL11RA and IL6ST stimulates 'classic signaling', whereas the binding of IL11 and soluble IL11RA to IL6ST stimulates 'trans-signaling'. The protein is Interleukin-11 of Rattus norvegicus (Rat).